Reading from the N-terminus, the 250-residue chain is UPF0259 membrane protein Spro_2675 (250 aa).

Helical transmembrane passes span I23–P43, A87–I107, L132–V152, I156–F176, V192–S212, and A222–F242.

It belongs to the UPF0259 family.

It localises to the cell inner membrane. The sequence is that of UPF0259 membrane protein Spro_2675 from Serratia proteamaculans (strain 568).